The sequence spans 275 residues: 3-methyl-2-oxobutanoate hydroxymethyltransferase (275 aa).

Residues aspartate 51 and aspartate 90 each coordinate Mg(2+). 3-methyl-2-oxobutanoate-binding positions include 51-52 (DS), aspartate 90, and lysine 120. Glutamate 122 contributes to the Mg(2+) binding site. The Proton acceptor role is filled by glutamate 189.

The protein belongs to the PanB family. In terms of assembly, homodecamer; pentamer of dimers. It depends on Mg(2+) as a cofactor.

It localises to the cytoplasm. The catalysed reaction is 3-methyl-2-oxobutanoate + (6R)-5,10-methylene-5,6,7,8-tetrahydrofolate + H2O = 2-dehydropantoate + (6S)-5,6,7,8-tetrahydrofolate. It participates in cofactor biosynthesis; (R)-pantothenate biosynthesis; (R)-pantoate from 3-methyl-2-oxobutanoate: step 1/2. Catalyzes the reversible reaction in which hydroxymethyl group from 5,10-methylenetetrahydrofolate is transferred onto alpha-ketoisovalerate to form ketopantoate. The chain is 3-methyl-2-oxobutanoate hydroxymethyltransferase from Caulobacter vibrioides (strain ATCC 19089 / CIP 103742 / CB 15) (Caulobacter crescentus).